Consider the following 30-residue polypeptide: Photosystem I reaction center subunit XII (30 aa).

A helical transmembrane segment spans residues 7–29; that stretch reads VYTVLLIALLASVLAIRLGSTLY.

The protein belongs to the PsaM family.

The protein localises to the plastid. It localises to the chloroplast thylakoid membrane. The protein is Photosystem I reaction center subunit XII of Trieres chinensis (Marine centric diatom).